The chain runs to 334 residues: Glycerol-3-phosphate dehydrogenase [NAD(P)+] (334 aa).

The NADPH site is built by Trp13, Arg33, and Lys106. The sn-glycerol 3-phosphate site is built by Lys106, Gly137, and Ser139. Ala141 contributes to the NADPH binding site. Lys192, Asp245, Ser255, Arg256, and Asn257 together coordinate sn-glycerol 3-phosphate. The active-site Proton acceptor is the Lys192. Arg256 is an NADPH binding site. NADPH is bound by residues Val280 and Glu282.

The protein belongs to the NAD-dependent glycerol-3-phosphate dehydrogenase family.

The protein resides in the cytoplasm. It catalyses the reaction sn-glycerol 3-phosphate + NAD(+) = dihydroxyacetone phosphate + NADH + H(+). The catalysed reaction is sn-glycerol 3-phosphate + NADP(+) = dihydroxyacetone phosphate + NADPH + H(+). It participates in membrane lipid metabolism; glycerophospholipid metabolism. Catalyzes the reduction of the glycolytic intermediate dihydroxyacetone phosphate (DHAP) to sn-glycerol 3-phosphate (G3P), the key precursor for phospholipid synthesis. This is Glycerol-3-phosphate dehydrogenase [NAD(P)+] from Chlamydia trachomatis serovar A (strain ATCC VR-571B / DSM 19440 / HAR-13).